The sequence spans 568 residues: Urease subunit alpha (568 aa).

A Urease domain is found at 130-568; sequence GGIDTHIHFI…LPMAQRYFLF (439 aa). Positions 135, 137, and 218 each coordinate Ni(2+). The residue at position 218 (K218) is an N6-carboxylysine. Residue H220 participates in substrate binding. Residues H247 and H273 each contribute to the Ni(2+) site. Residue H321 is the Proton donor of the active site. A Ni(2+)-binding site is contributed by D361.

The protein belongs to the metallo-dependent hydrolases superfamily. Urease alpha subunit family. In terms of assembly, heterotrimer of UreA (gamma), UreB (beta) and UreC (alpha) subunits. Three heterotrimers associate to form the active enzyme. Requires Ni cation as cofactor. In terms of processing, carboxylation allows a single lysine to coordinate two nickel ions.

The protein localises to the cytoplasm. It catalyses the reaction urea + 2 H2O + H(+) = hydrogencarbonate + 2 NH4(+). The protein operates within nitrogen metabolism; urea degradation; CO(2) and NH(3) from urea (urease route): step 1/1. The polypeptide is Urease subunit alpha (Burkholderia vietnamiensis (strain G4 / LMG 22486) (Burkholderia cepacia (strain R1808))).